Reading from the N-terminus, the 243-residue chain is Zinc import ATP-binding protein ZnuC (243 aa).

In terms of domain architecture, ABC transporter spans 8–225 (LNLSNVSYYI…SEFQKLFGHH (218 aa)). Residue 40 to 47 (GPNGAGKS) coordinates ATP.

Belongs to the ABC transporter superfamily. Zinc importer (TC 3.A.1.15.5) family. In terms of assembly, the complex is composed of two ATP-binding proteins (ZnuC), two transmembrane proteins (ZnuB) and a solute-binding protein (ZnuA).

The protein resides in the cell inner membrane. It carries out the reaction Zn(2+)(out) + ATP(in) + H2O(in) = Zn(2+)(in) + ADP(in) + phosphate(in) + H(+)(in). Its function is as follows. Part of the ABC transporter complex ZnuABC involved in zinc import. Responsible for energy coupling to the transport system. In Psychrobacter cryohalolentis (strain ATCC BAA-1226 / DSM 17306 / VKM B-2378 / K5), this protein is Zinc import ATP-binding protein ZnuC.